A 757-amino-acid polypeptide reads, in one-letter code: Cellulose synthase-like protein B1 (757 aa).

2 helical membrane-spanning segments follow: residues 18–38 (TNYFLRAVYLTVLGLFFSLLL) and 50–70 (VWLVAFFCESCFFLVCLLITC). Residue D136 is part of the active site. A coiled-coil region spans residues 186-216 (EFNRDWEKTKREYEKLRRKVEDATGDSHMLD). The active site involves D462. Helical transmembrane passes span 533–553 (LAYLCIITCLRSIPELIYCLL), 569–589 (LYLGITVTLVGIHCLYTLWEF), 615–635 (LFSIFDITLKLLGISETVFII), 674–694 (FLPGTFIVLVNIAALAVFSVG), 710–730 (AEACGCVLVMMLFLPFLMGLF), and 737–757 (TPLSTLSIAGFLAVLFVVFSV).

This sequence belongs to the glycosyltransferase 2 family. Plant cellulose synthase-like B subfamily. As to expression, expressed in young seedlings, primarily in the vascular tissue.

Its subcellular location is the golgi apparatus membrane. Thought to be a Golgi-localized beta-glycan synthase that polymerize the backbones of noncellulosic polysaccharides (hemicelluloses) of plant cell wall. This Arabidopsis thaliana (Mouse-ear cress) protein is Cellulose synthase-like protein B1 (CSLB1).